We begin with the raw amino-acid sequence, 263 residues long: S-acyl fatty acid synthase thioesterase, medium chain (263 aa).

At methionine 1 the chain carries N-acetylmethionine. Active-site residues include serine 101 and histidine 237. Residues 262–263 (LT) are important for interaction with FASN.

This sequence belongs to the thioesterase family. As to quaternary structure, interacts (via C-terminus) with FASN.

The protein localises to the cytoplasm. The protein resides in the cytosol. The enzyme catalyses (9Z)-octadecenoyl-[ACP] + H2O = (9Z)-octadecenoate + holo-[ACP] + H(+). It carries out the reaction decanoyl-CoA + H2O = decanoate + CoA + H(+). The catalysed reaction is dodecanoyl-CoA + H2O = dodecanoate + CoA + H(+). It catalyses the reaction tetradecanoyl-CoA + H2O = tetradecanoate + CoA + H(+). The enzyme catalyses hexadecanoyl-CoA + H2O = hexadecanoate + CoA + H(+). Its function is as follows. Contributes to the release of free fatty acids from fatty acid synthase (FASN). Has broad substrate specificity, giving rise to a range of free fatty acids with chain lengths between 10 and 16 carbon atoms (C10 - C16). This chain is S-acyl fatty acid synthase thioesterase, medium chain, found in Rattus norvegicus (Rat).